We begin with the raw amino-acid sequence, 151 residues long: MFRGANAINLDAKGRLAMPSRYRDELDSRSAGQMIVTIDAVDPCLCLYPLSEWELIEAKLRDLATFREENRRLQRLLIGNAVDLELDGSGRFLVPPRLREYARLDKRVMLVGQLNKFQLWDEDAWNALADADLAAIQKPGAMPDELRDLIL.

2 consecutive SpoVT-AbrB domains span residues 5–52 (ANAI…PLSE) and 81–124 (AVDL…DEDA).

Belongs to the MraZ family. In terms of assembly, forms oligomers.

Its subcellular location is the cytoplasm. The protein localises to the nucleoid. The chain is Transcriptional regulator MraZ from Pseudomonas syringae pv. tomato (strain ATCC BAA-871 / DC3000).